Consider the following 425-residue polypeptide: Pre-mRNA-splicing factor PRP46 (425 aa).

WD repeat units follow at residues 111–151, 154–193, 196–235, 238–279, 281–320, 322–360, and 371–410; these read GHTG…LKVT, GHIMTVRDICISARHPYMFSASQDKLVKCWDLERNTVVRD, GTLSGVHSVDLHPSLDLIVSAGRDSVVRVWDIRSRSCVLT, GHRG…KTLT, HKRNVRDLAFNPTEFSFASACTDDIRSWKLVDGQLLTNFN, EALGIVNTLACNQDGVLFAGGDTGELSFFDYKTGHKFQK, and ESEKGVLASTFDRTGLRLLTCERDKSIKIWKHIDGATQDS.

Belongs to the WD repeat PRL1/PRL2 family. As to quaternary structure, associated with the spliceosome.

It is found in the cytoplasm. The protein localises to the nucleus. Its function is as follows. Involved in pre-mRNA splicing and required for cell cycle progression at G2/M. In Eremothecium gossypii (strain ATCC 10895 / CBS 109.51 / FGSC 9923 / NRRL Y-1056) (Yeast), this protein is Pre-mRNA-splicing factor PRP46 (PRP46).